The sequence spans 355 residues: Probable nitronate monooxygenase (355 aa).

Residues Asn71, Gln175, Gly180, Gly219, and 238–241 (QMGT) each bind FMN.

The protein belongs to the nitronate monooxygenase family. NMO class I subfamily. FMN is required as a cofactor.

The enzyme catalyses 3 propionate 3-nitronate + 3 O2 + H2O = 3 3-oxopropanoate + 2 nitrate + nitrite + H2O2 + 3 H(+). Nitronate monooxygenase that uses molecular oxygen to catalyze the oxidative denitrification of alkyl nitronates. Acts on propionate 3-nitronate (P3N), the presumed physiological substrate. Probably functions in the detoxification of P3N, a metabolic poison produced by plants and fungi as a defense mechanism. The protein is Probable nitronate monooxygenase of Staphylococcus saprophyticus subsp. saprophyticus (strain ATCC 15305 / DSM 20229 / NCIMB 8711 / NCTC 7292 / S-41).